Consider the following 285-residue polypeptide: Tumor necrosis factor ligand superfamily member 13B (285 aa).

The Cytoplasmic segment spans residues 1–46; it reads MDDSTEREQSRLTSCLKKREEMKLKECVSILPRKESPSVRSSKDGK. A helical; Signal-anchor for type II membrane protein transmembrane segment spans residues 47–67; sequence LLAATLLLALLSCCLTVVSFY. At 68 to 285 the chain is on the extracellular side; the sequence is QVAALQGDLA…VTFFGALKLL (218 aa). The disordered stretch occupies residues 114-138; that stretch reads IFEPPAPGEGNSSQNSRNKRAVQGP. The N-linked (GlcNAc...) asparagine glycan is linked to N124. In terms of domain architecture, THD spans 145 to 284; the sequence is DCLQLIADSE…DVTFFGALKL (140 aa). The cysteines at positions 232 and 245 are disulfide-linked. The N-linked (GlcNAc...) (high mannose) asparagine glycan is linked to N242.

It belongs to the tumor necrosis factor family. As to quaternary structure, homotrimer. Isoform 2 heteromultimerizes with isoform 1, probably limiting the amount of functional isoform 1 on the cell surface. Isoform 3 is unlikely form trimers or bind to BAFF receptors. In terms of processing, the soluble form derives from the membrane form by proteolytic processing. Isoform 2 is not efficiently shed from the membrane unlike isoform 1. Post-translationally, N-glycosylated. As to expression, abundantly expressed in peripheral blood Leukocytes and is specifically expressed in monocytes and macrophages. Also found in the spleen, lymph node, bone marrow, T-cells and dendritic cells. A lower expression seen in placenta, heart, lung, fetal liver, thymus, and pancreas. Isoform 2 is expressed in many myeloid cell lines.

Its subcellular location is the cell membrane. The protein localises to the secreted. Its function is as follows. Cytokine that binds to TNFRSF13B/TACI and TNFRSF17/BCMA. TNFSF13/APRIL binds to the same 2 receptors. Together, they form a 2 ligands -2 receptors pathway involved in the stimulation of B- and T-cell function and the regulation of humoral immunity. A third B-cell specific BAFF-receptor (BAFFR/BR3) promotes the survival of mature B-cells and the B-cell response. In terms of biological role, isoform 2 seems to inhibit isoform 1 secretion and bioactivity. Functionally, acts as a transcription factor for its own parent gene, in association with NF-kappa-B p50 subunit, at least in autoimmune and proliferative B-cell diseases. The presence of Delta4BAFF is essential for soluble BAFF release by IFNG/IFN-gamma-stimulated monocytes and for B-cell survival. It can directly or indirectly regulate the differential expression of a large number of genes involved in the innate immune response and the regulation of apoptosis. This is Tumor necrosis factor ligand superfamily member 13B (TNFSF13B) from Homo sapiens (Human).